Consider the following 988-residue polypeptide: Voltage-gated delayed rectifier potassium channel KCNH5 (988 aa).

Topologically, residues methionine 1–tryptophan 217 are cytoplasmic. The region spanning threonine 14–aspartate 86 is the PAS domain. The PAC domain occupies asparagine 91–threonine 143. Residues aspartate 218–phenylalanine 238 form a helical membrane-spanning segment. At lysine 239–asparagine 243 the chain is on the extracellular side. Residues asparagine 244–leucine 264 traverse the membrane as a helical segment. The Cytoplasmic portion of the chain corresponds to asparagine 265–threonine 291. The chain crosses the membrane as a helical span at residues tryptophan 292–valine 312. Topologically, residues aspartate 313–leucine 319 are extracellular. Residues phenylalanine 320–histidine 340 form a helical; Voltage-sensor membrane-spanning segment. The Cytoplasmic portion of the chain corresponds to tyrosine 341 to alanine 346. A helical membrane pass occupies residues alanine 347–tryptophan 367. The Extracellular portion of the chain corresponds to tyrosine 368 to tyrosine 419. N-linked (GlcNAc...) asparagine glycosylation is present at asparagine 403. The segment at residues valine 420–proline 440 is an intramembrane region (pore-forming). The Selectivity filter signature appears at threonine 432–asparagine 437. Residues threonine 441 to lysine 446 lie on the Extracellular side of the membrane. A helical transmembrane segment spans residues methionine 447 to valine 467. Topologically, residues threonine 468–phenylalanine 988 are cytoplasmic. Alanine 550–threonine 667 lines the a nucleoside 3',5'-cyclic phosphate pocket. The tract at residues histidine 704–glutamine 715 is calmodulin-binding. Positions glutamate 718–glutamine 742 are disordered. Residues asparagine 721–glutamine 742 are compositionally biased toward polar residues. A Glycyl lysine isopeptide (Lys-Gly) (interchain with G-Cter in ubiquitin) cross-link involves residue lysine 785. Disordered regions lie at residues leucine 839–proline 897 and serine 946–isoleucine 965. The span at serine 871 to leucine 885 shows a compositional bias: basic and acidic residues. Residue serine 883 is modified to Phosphoserine. Positions threonine 909 to proline 948 are CAD (involved in subunit assembly).

It belongs to the potassium channel family. H (Eag) (TC 1.A.1.20) subfamily. Kv10.2/KCNH5 sub-subfamily. Homotetramer. The potassium channel is probably composed of a homo- or heterotetrameric complex of pore-forming alpha subunits that can associate with modulating beta subunits. Heteromultimer with KCNH1/EAG. Detected in adult testis and in embryonic and adult brain, but not in other tissues. Highly expressed in specific brain areas, such as neocortex, olfactory bulb, primary olfactory cortex and brain stem. In cortex, expression is concentrated in a narrow band toward the middle lamella (layer IV). Moderately expressed in spinal cord, dorsal thalamic nuclei, medial hypothalamus, colliculus, lateral lemniscus, pontine nuclei and Islands of Calleja.

The protein localises to the membrane. The catalysed reaction is K(+)(in) = K(+)(out). Its activity is regulated as follows. Inhibited by low nanomolar concentrations of cytosolic calcium. Functionally, pore-forming (alpha) subunit of a voltage-gated delayed rectifier potassium channel that mediates outward-rectifying potassium currents which, on depolarization, reaches a steady-state level and do not inactivate. The kinetic is characterized by a slow activation time course and a small voltage dependence of the activation time constants, therefore, starts to open at more negative voltages. The activation kinetics depend on the prepulse potential and external divalent cation concentration. The time course of activation is biphasic with a fast and a slowly activating current component. With negative prepulses, the current activation is delayed and slowed down several fold, whereas more positive prepulses speed up activation, therefore the activation rate depends on holding potential. This is Voltage-gated delayed rectifier potassium channel KCNH5 from Rattus norvegicus (Rat).